The sequence spans 156 residues: MIVLGIDPALGSLGWAVVAKDTAKLKYLASGIIKTNSKDEIHNRLAFINSTLEKVILEYQPNMAAIEETFVNTNSVTSLKLGYARGAIMSLIGRYNLDMREFKPNMVKKTVTGYGHAEKDQILHMIKLLLPGTSAITNSDEADAVAIAYTCHVMRV.

Catalysis depends on residues aspartate 7, glutamate 67, and aspartate 140. Residues aspartate 7, glutamate 67, and aspartate 140 each coordinate Mg(2+).

The protein belongs to the RuvC family. Homodimer which binds Holliday junction (HJ) DNA. The HJ becomes 2-fold symmetrical on binding to RuvC with unstacked arms; it has a different conformation from HJ DNA in complex with RuvA. In the full resolvosome a probable DNA-RuvA(4)-RuvB(12)-RuvC(2) complex forms which resolves the HJ. Mg(2+) is required as a cofactor.

It localises to the cytoplasm. The enzyme catalyses Endonucleolytic cleavage at a junction such as a reciprocal single-stranded crossover between two homologous DNA duplexes (Holliday junction).. The RuvA-RuvB-RuvC complex processes Holliday junction (HJ) DNA during genetic recombination and DNA repair. Endonuclease that resolves HJ intermediates. Cleaves cruciform DNA by making single-stranded nicks across the HJ at symmetrical positions within the homologous arms, yielding a 5'-phosphate and a 3'-hydroxyl group; requires a central core of homology in the junction. The consensus cleavage sequence is 5'-(A/T)TT(C/G)-3'. Cleavage occurs on the 3'-side of the TT dinucleotide at the point of strand exchange. HJ branch migration catalyzed by RuvA-RuvB allows RuvC to scan DNA until it finds its consensus sequence, where it cleaves and resolves the cruciform DNA. This is Crossover junction endodeoxyribonuclease RuvC from Rickettsia felis (strain ATCC VR-1525 / URRWXCal2) (Rickettsia azadi).